Here is a 172-residue protein sequence, read N- to C-terminus: Adenine phosphoribosyltransferase (172 aa).

It belongs to the purine/pyrimidine phosphoribosyltransferase family. As to quaternary structure, homodimer.

The protein localises to the cytoplasm. The enzyme catalyses AMP + diphosphate = 5-phospho-alpha-D-ribose 1-diphosphate + adenine. The protein operates within purine metabolism; AMP biosynthesis via salvage pathway; AMP from adenine: step 1/1. Its function is as follows. Catalyzes a salvage reaction resulting in the formation of AMP, that is energically less costly than de novo synthesis. This chain is Adenine phosphoribosyltransferase, found in Clostridium kluyveri (strain NBRC 12016).